Consider the following 294-residue polypeptide: Ribosomal RNA small subunit methyltransferase A (294 aa).

6 residues coordinate S-adenosyl-L-methionine: asparagine 31, leucine 33, glycine 58, glutamate 79, aspartate 111, and asparagine 136.

The protein belongs to the class I-like SAM-binding methyltransferase superfamily. rRNA adenine N(6)-methyltransferase family. RsmA subfamily.

Its subcellular location is the cytoplasm. The catalysed reaction is adenosine(1518)/adenosine(1519) in 16S rRNA + 4 S-adenosyl-L-methionine = N(6)-dimethyladenosine(1518)/N(6)-dimethyladenosine(1519) in 16S rRNA + 4 S-adenosyl-L-homocysteine + 4 H(+). Specifically dimethylates two adjacent adenosines (A1518 and A1519) in the loop of a conserved hairpin near the 3'-end of 16S rRNA in the 30S particle. May play a critical role in biogenesis of 30S subunits. This chain is Ribosomal RNA small subunit methyltransferase A, found in Lactobacillus acidophilus (strain ATCC 700396 / NCK56 / N2 / NCFM).